We begin with the raw amino-acid sequence, 125 residues long: Aspartate 1-decarboxylase (125 aa).

S25 acts as the Schiff-base intermediate with substrate; via pyruvic acid in catalysis. Position 25 is a pyruvic acid (Ser) (S25). T57 lines the substrate pocket. The active-site Proton donor is Y58. Residue 73-75 (GAA) coordinates substrate.

Belongs to the PanD family. Heterooctamer of four alpha and four beta subunits. The cofactor is pyruvate. Is synthesized initially as an inactive proenzyme, which is activated by self-cleavage at a specific serine bond to produce a beta-subunit with a hydroxyl group at its C-terminus and an alpha-subunit with a pyruvoyl group at its N-terminus.

Its subcellular location is the cytoplasm. It catalyses the reaction L-aspartate + H(+) = beta-alanine + CO2. Its pathway is cofactor biosynthesis; (R)-pantothenate biosynthesis; beta-alanine from L-aspartate: step 1/1. Catalyzes the pyruvoyl-dependent decarboxylation of aspartate to produce beta-alanine. The polypeptide is Aspartate 1-decarboxylase (Herpetosiphon aurantiacus (strain ATCC 23779 / DSM 785 / 114-95)).